A 405-amino-acid polypeptide reads, in one-letter code: Probable tRNA sulfurtransferase (405 aa).

The THUMP domain maps to 60 to 165 (DKVMGRLKLV…LNGIFLSSET (106 aa)). ATP is bound by residues 183-184 (ML), 208-209 (HF), arginine 265, glycine 287, and glutamine 296.

It belongs to the ThiI family.

Its subcellular location is the cytoplasm. It carries out the reaction [ThiI sulfur-carrier protein]-S-sulfanyl-L-cysteine + a uridine in tRNA + 2 reduced [2Fe-2S]-[ferredoxin] + ATP + H(+) = [ThiI sulfur-carrier protein]-L-cysteine + a 4-thiouridine in tRNA + 2 oxidized [2Fe-2S]-[ferredoxin] + AMP + diphosphate. It catalyses the reaction [ThiS sulfur-carrier protein]-C-terminal Gly-Gly-AMP + S-sulfanyl-L-cysteinyl-[cysteine desulfurase] + AH2 = [ThiS sulfur-carrier protein]-C-terminal-Gly-aminoethanethioate + L-cysteinyl-[cysteine desulfurase] + A + AMP + 2 H(+). Its pathway is cofactor biosynthesis; thiamine diphosphate biosynthesis. In terms of biological role, catalyzes the ATP-dependent transfer of a sulfur to tRNA to produce 4-thiouridine in position 8 of tRNAs, which functions as a near-UV photosensor. Also catalyzes the transfer of sulfur to the sulfur carrier protein ThiS, forming ThiS-thiocarboxylate. This is a step in the synthesis of thiazole, in the thiamine biosynthesis pathway. The sulfur is donated as persulfide by IscS. This chain is Probable tRNA sulfurtransferase, found in Lactiplantibacillus plantarum (strain ATCC BAA-793 / NCIMB 8826 / WCFS1) (Lactobacillus plantarum).